Here is a 672-residue protein sequence, read N- to C-terminus: MRSIRSFANDDRHVMVKHSTIYPSPEELEAVQNMVSTVECALKHVSDWMDEKNKSVKCEGDVEAKEEAAESNAKDQSGRTLCGVMRIGLVAKGLLIKDDMDLELVLMCKEKPTKTLLCIVKDNLPIQIQKLTEEKYLVEEHVNEAAIIIRNTKEPKLTLKVILTSPLIRDEAEKKEGDSVAMKDPPDLLDRQKCLEALASLRHAKWFQARANGLKSCVIVLRILRDLCNRVPTWAPLKGWPLELICEKSIGTCNRPLGAGEALRRVMECLASGILLPGGPGLHDPCEREPTDALSDMTVQQKEAITHSAQHALRLSAFGQIYKVLEMDPLPSNKSFQKYSWSVADKEGTGSSALKRPFEDGVGDDKDPNKKMKRNLRKILDSKAIDLMNALMRLNQIRPGLQYKLLSQSGPVHAPVFTMSVDVDGTTYEASGPSKKTAKLHVAVKVLQAMGYPTGFDADVECVSSDEKSDNEGKNETVSSISSNNTGNSTADTSATLEVRTQGPILTASGKNPVMELNEKRRGLKYELISETGGSHDKRFVMEVEVDGQKFRGAGPNKKVAKASAALAALEKLFSGPNAANNKKKKILPQQTKGVVNTAVSAAVQAVRGRGRGALTRGAFVGAAAATGYITPGYGAPYGYSTAAPAYGLPKRMVLLPVMKFPTYPVPHYSFF.

Residues 5–362 enclose the DZF domain; that stretch reads RSFANDDRHV…ALKRPFEDGV (358 aa). Residues 348 to 370 form a disordered region; it reads GTGSSALKRPFEDGVGDDKDPNK. The span at 356–370 shows a compositional bias: basic and acidic residues; sequence RPFEDGVGDDKDPNK. The region spanning 386-452 is the DRBM 1 domain; sequence DLMNALMRLN…AVKVLQAMGY (67 aa). The segment at 463-494 is disordered; it reads VSSDEKSDNEGKNETVSSISSNNTGNSTADTS. Positions 465–475 are enriched in basic and acidic residues; that stretch reads SDEKSDNEGKN. Low complexity predominate over residues 477 to 490; that stretch reads TVSSISSNNTGNST. In terms of domain architecture, DRBM 2 spans 509-575; it reads SGKNPVMELN…ALAALEKLFS (67 aa).

The protein localises to the cytoplasm. Its function is as follows. May be involved in normal spermatogenesis and sperm function. Binds to double-stranded DNA and RNA. In Gallus gallus (Chicken), this protein is Spermatid perinuclear RNA-binding protein (STRBP).